The sequence spans 159 residues: Ribosomal RNA large subunit methyltransferase H (159 aa).

Residues L76, G108, and 127–132 (FGLLTL) each bind S-adenosyl-L-methionine.

Belongs to the RNA methyltransferase RlmH family. As to quaternary structure, homodimer.

It localises to the cytoplasm. The enzyme catalyses pseudouridine(1915) in 23S rRNA + S-adenosyl-L-methionine = N(3)-methylpseudouridine(1915) in 23S rRNA + S-adenosyl-L-homocysteine + H(+). Specifically methylates the pseudouridine at position 1915 (m3Psi1915) in 23S rRNA. This chain is Ribosomal RNA large subunit methyltransferase H, found in Streptococcus equi subsp. zooepidemicus (strain MGCS10565).